Here is a 524-residue protein sequence, read N- to C-terminus: Peptide chain release factor 3 (524 aa).

In terms of domain architecture, tr-type G spans 9 to 275 (SRRRTFAIIS…AVVDLSPPPI (267 aa)). GTP is bound by residues 18–25 (SHPDAGKT), 86–90 (DTPGH), and 140–143 (NKLD).

Belongs to the TRAFAC class translation factor GTPase superfamily. Classic translation factor GTPase family. PrfC subfamily.

Its subcellular location is the cytoplasm. Its function is as follows. Increases the formation of ribosomal termination complexes and stimulates activities of RF-1 and RF-2. It binds guanine nucleotides and has strong preference for UGA stop codons. It may interact directly with the ribosome. The stimulation of RF-1 and RF-2 is significantly reduced by GTP and GDP, but not by GMP. The polypeptide is Peptide chain release factor 3 (Dechloromonas aromatica (strain RCB)).